The chain runs to 225 residues: Sirohydrochlorin ferrochelatase, chloroplastic (225 aa).

The N-terminal 46 residues, 1–46, are a transit peptide targeting the chloroplast; the sequence is MTTQSQFLVNLSYGGLASQSNLRANNRVSPSSCQITRTNRSWALPV. Positions 89 and 155 each coordinate Fe cation. [4Fe-4S] cluster-binding residues include Cys199, Cys210, Cys213, and Cys219.

The protein belongs to the CbiX family. SirB subfamily. As to quaternary structure, homodimer. Requires [4Fe-4S] cluster as cofactor.

The protein localises to the plastid. It localises to the chloroplast. The enzyme catalyses siroheme + 2 H(+) = sirohydrochlorin + Fe(2+). The protein operates within porphyrin-containing compound metabolism; siroheme biosynthesis; siroheme from sirohydrochlorin: step 1/1. Chelates iron to the siroheme precursor. Catalyzes the last step of the siroheme biosynthesis. Unlike its counterparts in bacteria, contains an [Fe-S] cluster which is not involved directly in the enzymatic reaction, but may play regulatory role in iron, sulfur and tetrapyrrole metabolism. The [Fe-S] cluster is required for normal plant growth. The polypeptide is Sirohydrochlorin ferrochelatase, chloroplastic (Arabidopsis thaliana (Mouse-ear cress)).